The sequence spans 344 residues: Photosystem II protein D1 (344 aa).

Thr-2 bears the N-acetylthreonine mark. Thr-2 carries the post-translational modification Phosphothreonine. 3 helical membrane passes run 29-46 (YIGW…TATS), 118-133 (HFFL…EWEL), and 142-156 (WIAV…AATA). Residue His-118 participates in chlorophyll a binding. Tyr-126 is a binding site for pheophytin a. [CaMn4O5] cluster-binding residues include Asp-170 and Glu-189. A helical transmembrane segment spans residues 197 to 218 (FHMLGVAGVFGGSLFSAMHGSL). His-198 provides a ligand contact to chlorophyll a. A quinone is bound by residues His-215 and 264 to 265 (SF). His-215 is a binding site for Fe cation. His-272 serves as a coordination point for Fe cation. A helical transmembrane segment spans residues 274–288 (FLAAWPVIGIWFTAL). Residues His-332, Glu-333, Asp-342, and Ala-344 each coordinate [CaMn4O5] cluster.

It belongs to the reaction center PufL/M/PsbA/D family. PSII is composed of 1 copy each of membrane proteins PsbA, PsbB, PsbC, PsbD, PsbE, PsbF, PsbH, PsbI, PsbJ, PsbK, PsbL, PsbM, PsbT, PsbX, PsbY, PsbZ, Psb30/Ycf12, at least 3 peripheral proteins of the oxygen-evolving complex and a large number of cofactors. It forms dimeric complexes. It depends on The D1/D2 heterodimer binds P680, chlorophylls that are the primary electron donor of PSII, and subsequent electron acceptors. It shares a non-heme iron and each subunit binds pheophytin, quinone, additional chlorophylls, carotenoids and lipids. D1 provides most of the ligands for the Mn4-Ca-O5 cluster of the oxygen-evolving complex (OEC). There is also a Cl(-1) ion associated with D1 and D2, which is required for oxygen evolution. The PSII complex binds additional chlorophylls, carotenoids and specific lipids. as a cofactor. In terms of processing, tyr-161 forms a radical intermediate that is referred to as redox-active TyrZ, YZ or Y-Z.

The protein resides in the plastid. Its subcellular location is the chloroplast thylakoid membrane. The enzyme catalyses 2 a plastoquinone + 4 hnu + 2 H2O = 2 a plastoquinol + O2. Functionally, photosystem II (PSII) is a light-driven water:plastoquinone oxidoreductase that uses light energy to abstract electrons from H(2)O, generating O(2) and a proton gradient subsequently used for ATP formation. It consists of a core antenna complex that captures photons, and an electron transfer chain that converts photonic excitation into a charge separation. The D1/D2 (PsbA/PsbD) reaction center heterodimer binds P680, the primary electron donor of PSII as well as several subsequent electron acceptors. In Pleurastrum terricola (Filamentous green alga), this protein is Photosystem II protein D1.